Consider the following 221-residue polypeptide: Large ribosomal subunit protein uL4 (221 aa).

The segment at 46 to 74 (AGTASTKTRSEVSGGGRKPWPQKHTGRAR) is disordered.

Belongs to the universal ribosomal protein uL4 family. In terms of assembly, part of the 50S ribosomal subunit.

Functionally, one of the primary rRNA binding proteins, this protein initially binds near the 5'-end of the 23S rRNA. It is important during the early stages of 50S assembly. It makes multiple contacts with different domains of the 23S rRNA in the assembled 50S subunit and ribosome. Its function is as follows. Forms part of the polypeptide exit tunnel. This chain is Large ribosomal subunit protein uL4, found in Petrotoga mobilis (strain DSM 10674 / SJ95).